Reading from the N-terminus, the 428-residue chain is MKTSLFKSLYFQVLTAIAIGILLGHYYPELGAQMKPLGDAFVKLIKMVIAPVIFCTVVTGIAGMESMKAVGRTGAVALLYFEIVSTIALIIGLIIVNVVQPGSGMNVDPATLDAKAVAIYAEQAKDQGIVGFLMDIIPGSVIGAFASGNILQVLLFAVMFGFALHRLGSKGQLIFNVIESFSQVIFGIINMIMRLAPIGAFGAMAFTIGKYGVGTLVQLGQLIVCFYITCILFVVVVLGSIARAAGFSIFKFIRYIREELLIVLGTSSSESVLPRMLDKMEKLGCRKSVVGLVIPTGYSFNLDGTSIYLTMAAVFIAQATNSHMDIFHQVTLLVVLLLSSKGAAGVTGSGFIVLAATISAVGHLPVAGLALILGIDRFMSEARALTNLVGNGVATVVVAKWVKELDHKKLDDVLNNRAPDGKTHELSS.

9 helical membrane passes run 4-24 (SLFKSLYFQVLTAIAIGILLG), 44-64 (LIKMVIAPVIFCTVVTGIAGM), 76-96 (VALLYFEIVSTIALIIGLIIV), 142-162 (IGAFASGNILQVLLFAVMFGF), 184-204 (VIFGIINMIMRLAPIGAFGAM), 222-242 (LIVCFYITCILFVVVVLGSIA), 289-309 (VVGLVIPTGYSFNLDGTSIYL), 326-346 (IFHQVTLLVVLLLSSKGAAGV), and 352-372 (IVLAATISAVGHLPVAGLALI).

This sequence belongs to the dicarboxylate/amino acid:cation symporter (DAACS) (TC 2.A.23) family.

The protein localises to the cell inner membrane. Responsible for the transport of dicarboxylates such as succinate, fumarate, and malate from the periplasm across the membrane. The sequence is that of C4-dicarboxylate transport protein from Citrobacter koseri (strain ATCC BAA-895 / CDC 4225-83 / SGSC4696).